A 344-amino-acid chain; its full sequence is N-acetyl-gamma-glutamyl-phosphate reductase (344 aa).

Residue cysteine 149 is part of the active site.

This sequence belongs to the NAGSA dehydrogenase family. Type 1 subfamily.

It is found in the cytoplasm. It catalyses the reaction N-acetyl-L-glutamate 5-semialdehyde + phosphate + NADP(+) = N-acetyl-L-glutamyl 5-phosphate + NADPH + H(+). Its pathway is amino-acid biosynthesis; L-arginine biosynthesis; N(2)-acetyl-L-ornithine from L-glutamate: step 3/4. In terms of biological role, catalyzes the NADPH-dependent reduction of N-acetyl-5-glutamyl phosphate to yield N-acetyl-L-glutamate 5-semialdehyde. The chain is N-acetyl-gamma-glutamyl-phosphate reductase from Thermoanaerobacter pseudethanolicus (strain ATCC 33223 / 39E) (Clostridium thermohydrosulfuricum).